The chain runs to 233 residues: tRNA (guanine-N(7)-)-methyltransferase (233 aa).

The interval 1–36 is disordered; the sequence is MSEFDPNPPRRNFYGRRHGKTLRQSQKGYLSEDLGS. Residues E68, E93, D120, and D142 each coordinate S-adenosyl-L-methionine. D142 is a catalytic residue. Substrate is bound by residues K146, D178, and 211–214; that span reads TRYE.

Belongs to the class I-like SAM-binding methyltransferase superfamily. TrmB family.

It carries out the reaction guanosine(46) in tRNA + S-adenosyl-L-methionine = N(7)-methylguanosine(46) in tRNA + S-adenosyl-L-homocysteine. It functions in the pathway tRNA modification; N(7)-methylguanine-tRNA biosynthesis. In terms of biological role, catalyzes the formation of N(7)-methylguanine at position 46 (m7G46) in tRNA. This is tRNA (guanine-N(7)-)-methyltransferase from Paracoccus denitrificans (strain Pd 1222).